Here is a 124-residue protein sequence, read N- to C-terminus: Aspartate 1-decarboxylase (124 aa).

Ser-21 serves as the catalytic Schiff-base intermediate with substrate; via pyruvic acid. Ser-21 carries the pyruvic acid (Ser) modification. Residue Thr-53 participates in substrate binding. Tyr-54 functions as the Proton donor in the catalytic mechanism. A substrate-binding site is contributed by 69–71; it reads GAA.

This sequence belongs to the PanD family. In terms of assembly, heterooctamer of four alpha and four beta subunits. The cofactor is pyruvate. In terms of processing, is synthesized initially as an inactive proenzyme, which is activated by self-cleavage at a specific serine bond to produce a beta-subunit with a hydroxyl group at its C-terminus and an alpha-subunit with a pyruvoyl group at its N-terminus.

The protein localises to the cytoplasm. It carries out the reaction L-aspartate + H(+) = beta-alanine + CO2. Its pathway is cofactor biosynthesis; (R)-pantothenate biosynthesis; beta-alanine from L-aspartate: step 1/1. Its function is as follows. Catalyzes the pyruvoyl-dependent decarboxylation of aspartate to produce beta-alanine. The protein is Aspartate 1-decarboxylase of Dehalococcoides mccartyi (strain ATCC BAA-2266 / KCTC 15142 / 195) (Dehalococcoides ethenogenes (strain 195)).